Reading from the N-terminus, the 115-residue chain is uncharacterized protein (115 aa).

The Cytoplasmic segment spans residues 1–11 (MKLTKEKKNDC). Residues 12 to 32 (LVGVSYIPPLNFFTLTFLFLL) traverse the membrane as a helical segment. Over 33–52 (RIEKVHLSLSLSLSLSLRFY) the chain is Extracellular. A helical transmembrane segment spans residues 53–73 (YFHNVCYPSLFLFFCFVIPFF). Topologically, residues 74–78 (YSVRF) are cytoplasmic. Residues 79–98 (ILLYLHILRSFYELNILLLY) traverse the membrane as a helical segment. At 99–115 (GAENSRRQSPPGYYVIR) the chain is on the extracellular side.

It is found in the membrane. This is an uncharacterized protein from Saccharomyces cerevisiae (strain ATCC 204508 / S288c) (Baker's yeast).